The sequence spans 310 residues: Keratin, type II cytoskeletal 8 (310 aa).

The tract at residues 1-38 (QRTLKVSSSGPRSFSSRSFSSGPSSRISSSSYSRVGSN) is disordered. K5 participates in a covalent cross-link: Glycyl lysine isopeptide (Lys-Gly) (interchain with G-Cter in SUMO2). Phosphoserine occurs at positions 7, 9, 15, and 16. Over residues 7-38 (SSSGPRSFSSRSFSSGPSSRISSSSYSRVGSN) the composition is skewed to low complexity. R17 is modified (omega-N-methylarginine). Phosphoserine is present on residues S18, S21, and S25. R26 is modified (omega-N-methylarginine). Phosphoserine is present on residues S28, S31, and S33. Omega-N-methylarginine is present on R34. Position 37 is a phosphoserine (S37). R42 carries the post-translational modification Asymmetric dimethylarginine; alternate. An Omega-N-methylarginine; alternate modification is found at R42. A coil 1A region spans residues 92–127 (EKEQIKTLNNKFASFIDKVRFLEQQNKILETKWSFL). The region spanning 92–310 (EKEQIKTLNN…LRHTKTEISE (219 aa)) is the IF rod domain. An N6-malonyllysine modification is found at K102. Glycyl lysine isopeptide (Lys-Gly) (interchain with G-Cter in SUMO2) cross-links involve residues K123 and K131. Residues 128-144 (QQQKTSQSNLDGLFEKY) form a linker 1 region. The interval 145-236 (ITNLRRQLDS…HLYEEEIKEM (92 aa)) is coil 1B. K198 participates in a covalent cross-link: Glycyl lysine isopeptide (Lys-Gly) (interchain with G-Cter in SUMO1); alternate. A Glycyl lysine isopeptide (Lys-Gly) (interchain with G-Cter in SUMO2); alternate cross-link involves residue K198. An N6-acetyllysine modification is found at K208. Position 229 is a phosphotyrosine (Y229). Residues 237 to 260 (QSQISDTSVVVSMDNSRSLDLDGI) form a linker 12 region. A phosphoserine mark is found at S254 and S275. Positions 261 to 310 (IADVRAQYEEIANRSRAEAETMYQIKYEELQLLAGKHGDDLRHTKTEISE) are coil 2. A Glycyl lysine isopeptide (Lys-Gly) (interchain with G-Cter in SUMO2) cross-link involves residue K286. K296 participates in a covalent cross-link: Glycyl lysine isopeptide (Lys-Gly) (interchain with G-Cter in SUMO2); alternate. Residue K296 is modified to N6-acetyllysine; alternate. K305 is covalently cross-linked (Glycyl lysine isopeptide (Lys-Gly) (interchain with G-Cter in SUMO2)).

Belongs to the intermediate filament family. In terms of assembly, heterotetramer of two type I and two type II keratins. Forms a heterodimer with KRT18. Associates with KRT20. Interacts with PNN. When associated with KRT19, interacts with DMD. Interacts with APEX1. Interacts with GPER1. Interacts with EPPK1. Interacts with PKP1 and PKP2. In terms of processing, O-glycosylated. O-GlcNAcylation at multiple sites increases solubility, and decreases stability by inducing proteasomal degradation. Post-translationally, O-glycosylated (O-GlcNAcylated), in a cell cycle-dependent manner.

Its subcellular location is the cytoplasm. It is found in the nucleus. The protein resides in the nucleoplasm. The protein localises to the nucleus matrix. Its function is as follows. Together with KRT19, helps to link the contractile apparatus to dystrophin at the costameres of striated muscle. This is Keratin, type II cytoskeletal 8 from Potorous tridactylus (Potoroo).